Here is a 187-residue protein sequence, read N- to C-terminus: Nodulin-related protein 1 (187 aa).

Met1 bears the N-acetylmethionine mark. Disordered regions lie at residues 1–66 (MDFF…ATNA) and 132–176 (YETS…HGFG). A compositionally biased stretch (basic and acidic residues) spans 7–48 (QVKKKFSDKKPESSDPEPNHNKNKPGHTEPTTHKPGHGEPTT). Residues 142 to 158 (GGTGSHGNVGGHGGGAG) show a composition bias toward gly residues.

As to quaternary structure, interacts with RPS2. Expressed in roots, leaves, flowers and siliques.

In terms of biological role, prevents accumulation of abscisic acid (ABA) after heat treatment, thus reducing thermotolerance. May be a negative regulator of the ABA signaling/synthesis pathway. Required for defense responses against avirulent bacteria such as P.syringae pv. tomato DC3000 (avrRpt2). In Arabidopsis thaliana (Mouse-ear cress), this protein is Nodulin-related protein 1.